Here is a 130-residue protein sequence, read N- to C-terminus: MYRALTRDIEVTVEPYYLEEQSDPDDSRYVWGYRIVISNHSEIAVRLMTRYWHITDENGQVDEVSGPGVIGEQPLLNPGDTYEYSSGCPLDTPSGVMFGHYSMEAEDGETFNVAIPAFSLDSPGLVRTLN.

Residues 3–127 form the ApaG domain; the sequence is RALTRDIEVT…FSLDSPGLVR (125 aa).

This Sinorhizobium fredii (strain NBRC 101917 / NGR234) protein is Protein ApaG.